The sequence spans 343 residues: MISIVKSKSFGLAAVMTLICSVAGIFLAKLPYVNLIGALVIALLLGISLQVLPVGVREEAAPGIGFISNKFLRLGIILLGFRLNLTKLADAGIKTILVAMLGVSGTIVLTYWLSKKFGAEDELAVLSACGCGICGAAAVMGVSPQIESRDEERKRENEVLAVAVVCVMGTVFTLLEIVIKPMLGLTDSQFGIVAGGSLHEIAHAIAAGSAFGEASLDSALIMKLSRVLLLAPVALIIGYWYQRRLVKESAQDHTQAPKKLPIPWFLGGFILTSILGTFLPFPPVVLDGLVQAAYVFLGMAMAALGISVNFSVIFKRGGTVFGAAAISSTCLMIFMIIMSKLFF.

10 helical membrane passes run 10–27 (FGLA…GIFL), 32–54 (YVNL…VLPV), 64–86 (IGFI…LNLT), 91–113 (AGIK…TYWL), 123–145 (LAVL…VSPQ), 157–179 (NEVL…EIVI), 219–241 (ALIM…GYWY), 262–284 (IPWF…FPPV), 288–310 (GLVQ…SVNF), and 317–339 (GGTV…IIMS).

Belongs to the UPF0324 family.

Its subcellular location is the cell membrane. In Lactobacillus johnsonii (strain CNCM I-12250 / La1 / NCC 533), this protein is UPF0324 membrane protein LJ_1117.